Here is a 124-residue protein sequence, read N- to C-terminus: Small ribosomal subunit protein bS16 (124 aa).

The disordered stretch occupies residues 82–124 (LAKRPARSNPTKAVPGKKAQERAAEAKQKAEDAAAAAAESAAE). The segment covering 99-113 (KAQERAAEAKQKAED) has biased composition (basic and acidic residues). Positions 114-124 (AAAAAAESAAE) are enriched in low complexity.

This sequence belongs to the bacterial ribosomal protein bS16 family.

The sequence is that of Small ribosomal subunit protein bS16 from Sinorhizobium fredii (strain NBRC 101917 / NGR234).